The primary structure comprises 194 residues: uncharacterized protein (194 aa).

Disordered stretches follow at residues 52–71 and 86–194; these read KGRT…EKYK and AEAL…DGGS. Polar residues-rich tracts occupy residues 53-63, 98-111, and 119-132; these read GRTTQSAINSE, ALTS…SSTN, and IAHS…TSPA. Residues 133 to 169 show a composition bias toward basic residues; that stretch reads NRHRRKEKERTRSNHRHGSHRRHEPYRTHLSRHHRHS. Positions 175-194 are enriched in basic and acidic residues; that stretch reads SKRDDRYERRREHSPNDGGS.

This is an uncharacterized protein from Schizosaccharomyces pombe (strain 972 / ATCC 24843) (Fission yeast).